Here is a 474-residue protein sequence, read N- to C-terminus: Carbohydrate sulfotransferase 3 (474 aa).

Residues 1 to 19 (MEKGLALPQDCRDLVHNLK) are Cytoplasmic-facing. Residues 20 to 38 (IRGRYVLFLAFVVIVFIFI) form a helical; Signal-anchor for type II membrane protein membrane-spanning segment. Over 39 to 474 (EKENKIISRV…LEERGTFWVT (436 aa)) the chain is Lumenal. Residues N63, N74, and N96 are each glycosylated (N-linked (GlcNAc...) asparagine). 137-143 (TRTGSSF) serves as a coordination point for 3'-phosphoadenylyl sulfate. N252 carries N-linked (GlcNAc...) asparagine glycosylation. Residue 297 to 305 (RDPRAVLAS) coordinates 3'-phosphoadenylyl sulfate. N-linked (GlcNAc...) asparagine glycosylation is found at N415 and N459.

Belongs to the sulfotransferase 1 family. Gal/GlcNAc/GalNAc subfamily. In terms of processing, N-glycosylated.

Its subcellular location is the golgi apparatus membrane. It carries out the reaction chondroitin beta-D-glucuronate + n 3'-phosphoadenylyl sulfate = chondroitin 6'-sulfate + n adenosine 3',5'-bisphosphate + n H(+). The enzyme catalyses 3'-phosphoadenylyl sulfate + keratan = adenosine 3',5'-bisphosphate + keratan 6'-sulfate.. Functionally, sulfotransferase that utilizes 3'-phospho-5'-adenylyl sulfate (PAPS) as sulfonate donor to catalyze the transfer of sulfate to position 6 of the N-acetylgalactosamine (GalNAc) residue of chondroitin. Chondroitin sulfate constitutes the predominant proteoglycan present in cartilage and is distributed on the surfaces of many cells and extracellular matrices. Catalyzes with a lower efficiency the sulfation of Gal residues of keratan sulfate, another glycosaminoglycan. Can also catalyze the sulfation of the Gal residues in sialyl N-acetyllactosamine (sialyl LacNAc) oligosaccharides. May play a role in the maintenance of naive T-lymphocytes in the spleen. The chain is Carbohydrate sulfotransferase 3 (Chst3) from Rattus norvegicus (Rat).